The chain runs to 602 residues: Potassium-transporting ATPase potassium-binding subunit (602 aa).

10 helical membrane-spanning segments follow: residues 3–23, 64–84, 135–155, 178–198, 282–302, 313–333, 418–438, 456–476, 522–542, and 565–585; these read ANNLLQAAIFIVVLIAAAVPV, QYALATVAFNALGVLFLYALL, GLTVQNFLSAATGIVVVLALI, LYVLVPMAAIIAALLMSQGVI, FSNFLEIFAILIIPAALCLVF, VAVLAAMTVALAAAIGIETSA, GLYGMLVFALLAVFVAGLMIG, VSIVVLLTPLLVLVGTSIAVL, WMTAIAMWFGRFGTIVPVLAI, and LFVVLLLGTVLLVGALTYMPA.

The protein belongs to the KdpA family. The system is composed of three essential subunits: KdpA, KdpB and KdpC.

The protein resides in the cell inner membrane. Functionally, part of the high-affinity ATP-driven potassium transport (or Kdp) system, which catalyzes the hydrolysis of ATP coupled with the electrogenic transport of potassium into the cytoplasm. This subunit binds the periplasmic potassium ions and delivers the ions to the membrane domain of KdpB through an intramembrane tunnel. The protein is Potassium-transporting ATPase potassium-binding subunit of Burkholderia mallei (strain ATCC 23344).